A 681-amino-acid polypeptide reads, in one-letter code: MNDPGDIPLTHTSTPDSRPPCSIISIIPTIGMSSCRGRAEAFARSLSSKLRTLGSQTTEEGEGNAEDEPIINGTSTNTWVNSHDSEQTVTDLQPLRHESDSFFDFDCELESPGSPVDECEYLRLIETASNTPHNSTAESGYACASMASSHSSSNDGPYFDASASTSTAAAAQDQTLPASEHKEYVNTLQLNGKHGLANGVQEEQPAFQDDVQEDEAFLQAQILNELQKHSNSLTEVEQTKPEEGKLTNGHLEKVEELELKDVLEVAGTTNRAPKVIAAPQEVEAFADRSQEQSPNDRVQKESSQERVPEGTPFEGVQGESPSDRVQTDASDERVQEEISNDTVQVESNHKSATESISTEVTTLERSPEESRNDELSPDSGVDETDKSASNLTVDVDLAQIEQAKQDATEAVEKSGAPSRGTTVDTTDDEDDCRPQRIRRCSSLKTGKTPPGTPGRKKIVRFADVLGLDLADVKTFLDEIPTIPKSAFEDLEILESEPPLQLGPKSDKLLMPLFQQPGGLPKFLDAVREKQVSLENAAVTDNINQTISGSVRVRNLDFHKSVHIRYSLDGWRSYADLQANYVENSCDGFSDIFTFVLFGNSLHVGQRLEFAVRFQCKGQQFWDNNYGANYCFQCLPSSTHTAGGSTASPPSVATGAVSTGHSASLVGLLSPTAGDAWCSSFY.

Disordered stretches follow at residues 1-20, 53-94, 232-251, 285-391, and 405-435; these read MNDP…SRPP, LGSQ…DLQP, SLTE…NGHL, FADR…ASNL, and QDAT…CRPQ. Positions 59–69 are enriched in acidic residues; sequence EEGEGNAEDEP. Over residues 72 to 91 the composition is skewed to polar residues; that stretch reads NGTSTNTWVNSHDSEQTVTD. 3 stretches are compositionally biased toward basic and acidic residues: residues 237–251, 297–308, and 321–336; these read EQTK…NGHL, RVQKESSQERVP, and PSDR…RVQE. Polar residues predominate over residues 353-364; the sequence is TESISTEVTTLE. The segment covering 365–374 has biased composition (basic and acidic residues); it reads RSPEESRNDE. The 108-residue stretch at 525-632 folds into the CBM21 domain; sequence AVREKQVSLE…NNYGANYCFQ (108 aa). A Phosphothreonine modification is found at Thr545. A phosphoserine mark is found at Ser547 and Ser549.

This chain is Glycogen-binding subunit 76A (Gbs-76A), found in Drosophila melanogaster (Fruit fly).